A 305-amino-acid chain; its full sequence is Oxygen-dependent coproporphyrinogen-III oxidase (305 aa).

Serine 92 is a substrate binding site. 2 residues coordinate a divalent metal cation: histidine 96 and histidine 106. Residue histidine 106 is the Proton donor of the active site. 108–110 (NVR) provides a ligand contact to substrate. Residues histidine 145 and histidine 175 each coordinate a divalent metal cation. The important for dimerization stretch occupies residues 239–274 (YVEFNLLFDRGTLFGLQSGGRAESILISLPPLVRWE). 257 to 259 (GGR) is a substrate binding site.

The protein belongs to the aerobic coproporphyrinogen-III oxidase family. Homodimer. The cofactor is a divalent metal cation.

It localises to the cytoplasm. The enzyme catalyses coproporphyrinogen III + O2 + 2 H(+) = protoporphyrinogen IX + 2 CO2 + 2 H2O. It functions in the pathway porphyrin-containing compound metabolism; protoporphyrin-IX biosynthesis; protoporphyrinogen-IX from coproporphyrinogen-III (O2 route): step 1/1. Functionally, involved in the heme biosynthesis. Catalyzes the aerobic oxidative decarboxylation of propionate groups of rings A and B of coproporphyrinogen-III to yield the vinyl groups in protoporphyrinogen-IX. This Xylella fastidiosa (strain 9a5c) protein is Oxygen-dependent coproporphyrinogen-III oxidase.